The sequence spans 662 residues: DNA ligase (662 aa).

Residues 34–38, 83–84, and Glu113 each bind NAD(+); these read DYEYD and SI. The N6-AMP-lysine intermediate role is filled by Lys115. Residues Arg136, Glu172, Lys286, and Lys310 each contribute to the NAD(+) site. Residues Cys404, Cys407, Cys422, and Cys427 each contribute to the Zn(2+) site. Residues 583 to 662 form the BRCT domain; the sequence is KSGSTCFGKA…EAFTNLIHLE (80 aa).

This sequence belongs to the NAD-dependent DNA ligase family. LigA subfamily. Mg(2+) is required as a cofactor. Mn(2+) serves as cofactor.

The enzyme catalyses NAD(+) + (deoxyribonucleotide)n-3'-hydroxyl + 5'-phospho-(deoxyribonucleotide)m = (deoxyribonucleotide)n+m + AMP + beta-nicotinamide D-nucleotide.. DNA ligase that catalyzes the formation of phosphodiester linkages between 5'-phosphoryl and 3'-hydroxyl groups in double-stranded DNA using NAD as a coenzyme and as the energy source for the reaction. It is essential for DNA replication and repair of damaged DNA. The sequence is that of DNA ligase from Chlamydia pneumoniae (Chlamydophila pneumoniae).